We begin with the raw amino-acid sequence, 532 residues long: Zinc finger protein ZIC 2 (532 aa).

Residues 100–255 (PHAAHVGSYS…YMRQQCIKQE (156 aa)) are necessary for interaction with MDFIC and transcriptional activation or repression. A phosphoserine mark is found at Ser191 and Ser199. Lys253 is covalently cross-linked (Glycyl lysine isopeptide (Lys-Gly) (interchain with G-Cter in SUMO2)). The C2H2-type 1; atypical zinc finger occupies 256 to 291 (LICKWIDPEQLSNPKKSCNKTFSTMHELVTHVSVEH). Residues 300–327 (HVCFWEECPREGKPFKAKYKLVNHIRVH) form a C2H2-type 2; atypical zinc finger. C2H2-type zinc fingers lie at residues 333–357 (FPCP…KRTH), 363–387 (FQCE…MHVH), and 393–415 (YLCK…MKVH). 2 disordered regions span residues 406–452 (SSLR…SSSN) and 475–532 (HRGG…EWYV). Residues 417–435 (SSPQGSESSPAASSGYESS) are compositionally biased toward low complexity. Residues 476 to 521 (RGGGSGSGGAGGGSGGGSGSGGGGGGAGGGGGGSSGGGSGTAGGHS) show a composition bias toward gly residues. Over residues 523–532 (LSSNFNEWYV) the composition is skewed to polar residues.

Belongs to the GLI C2H2-type zinc-finger protein family. In terms of assembly, interacts with RNF180. Interacts (via the C2H2-type domains 3, 4 and 5) with MDFIC (via the C2H2-type domains 3, 4 and 5); the interaction reduces its transcriptional activity. Interacts with GLI1 and GLI2. Interacts (via C2H2-type domain 3) with DHX9. In terms of processing, phosphorylated. Ubiquitinated by RNF180, leading to its degradation.

The protein localises to the nucleus. Its subcellular location is the cytoplasm. Functionally, acts as a transcriptional activator or repressor. Plays important roles in the early stage of organogenesis of the CNS. Activates the transcription of the serotonin transporter SERT in uncrossed ipsilateral retinal ganglion cells (iRGCs) to refine eye-specific projections in primary visual targets. Its transcriptional activity is repressed by MDFIC. Involved in the formation of the ipsilateral retinal projection at the optic chiasm midline. Drives the expression of EPHB1 on ipsilaterally projecting growth cones. Binds to the minimal GLI-consensus sequence 5'-TGGGTGGTC-3'. Associates to the basal SERT promoter region from ventrotemporal retinal segments of retinal embryos. The chain is Zinc finger protein ZIC 2 (ZIC2) from Homo sapiens (Human).